We begin with the raw amino-acid sequence, 140 residues long: Large ribosomal subunit protein bL17 (140 aa).

This sequence belongs to the bacterial ribosomal protein bL17 family. Part of the 50S ribosomal subunit. Contacts protein L32.

This chain is Large ribosomal subunit protein bL17, found in Beijerinckia indica subsp. indica (strain ATCC 9039 / DSM 1715 / NCIMB 8712).